The chain runs to 336 residues: Probable allantoicase (336 aa).

This sequence belongs to the allantoicase family.

The enzyme catalyses allantoate + H2O = (S)-ureidoglycolate + urea. Its pathway is nitrogen metabolism; (S)-allantoin degradation; (S)-ureidoglycolate from allantoate (aminidohydrolase route): step 1/1. This Ralstonia nicotianae (strain ATCC BAA-1114 / GMI1000) (Ralstonia solanacearum) protein is Probable allantoicase.